The sequence spans 175 residues: Ribosome maturation factor RimM (175 aa).

In terms of domain architecture, PRC barrel spans 100-174 (EDEYYWNDVI…VKHKIITVIW (75 aa)).

This sequence belongs to the RimM family. Binds ribosomal protein uS19.

It is found in the cytoplasm. Its function is as follows. An accessory protein needed during the final step in the assembly of 30S ribosomal subunit, possibly for assembly of the head region. Essential for efficient processing of 16S rRNA. May be needed both before and after RbfA during the maturation of 16S rRNA. It has affinity for free ribosomal 30S subunits but not for 70S ribosomes. This chain is Ribosome maturation factor RimM, found in Buchnera aphidicola subsp. Schizaphis graminum (strain Sg).